A 272-amino-acid chain; its full sequence is Endogenous Bornavirus-like nucleoprotein 2 (272 aa).

Positions 48–70 (MSHLRKDSQPSSPGDDAMDRSGL) are disordered.

Its function is as follows. May act as an RNA-binding protein. The C-terminal region is highly homologous to the bornavirus nucleocapsid N protein that binds viral RNA and oligomerizes. The viral protein also possesses a nuclear import and a nuclear export signal. These 2 signals seem absent in EBLN-2 supporting an unrelated function in Human. This is Endogenous Bornavirus-like nucleoprotein 2 (EBLN2) from Homo sapiens (Human).